The following is a 57-amino-acid chain: Large ribosomal subunit protein bL33 (57 aa).

Belongs to the bacterial ribosomal protein bL33 family.

The protein is Large ribosomal subunit protein bL33 of Akkermansia muciniphila (strain ATCC BAA-835 / DSM 22959 / JCM 33894 / BCRC 81048 / CCUG 64013 / CIP 107961 / Muc).